Consider the following 509-residue polypeptide: Cruciferin CRU1 (509 aa).

The first 23 residues, 1-23 (MVKVPHLLVATFGVLLVLNGCLA), serve as a signal peptide directing secretion. C37 and C70 are disulfide-bonded. The region spanning 42–271 (LDVLQPTETI…ALKIDVRLAQ (230 aa)) is the Cupin type-1 1 domain. Phosphoserine occurs at positions 53 and 97. C113 and C326 are disulfide-bonded. Residue T116 is modified to Phosphothreonine. 3 disordered regions span residues 119-175 (DSQP…GFRD), 230-249 (RLAG…QQQN), and 301-321 (YESE…DNGL). The segment covering 124–172 (QGQQQGQPWQGQQGQQGQQGQQGQQGQQGQQGQQGQQGQQGQQGQQQQG) has biased composition (low complexity). Positions 332 to 481 (ENIDDPARAD…AFQISLEEAR (150 aa)) constitute a Cupin type-1 2 domain. S352 carries the post-translational modification Phosphoserine. T445 and T487 each carry phosphothreonine.

Belongs to the 11S seed storage protein (globulins) family. In terms of assembly, hexamer; each subunit is composed of an acidic and a basic chain derived from a single precursor and linked by a disulfide bond.

In terms of biological role, this is a seed storage protein. The sequence is that of Cruciferin CRU1 (CRU1) from Brassica napus (Rape).